The chain runs to 174 residues: Large ribosomal subunit protein uL16 (174 aa).

Belongs to the universal ribosomal protein uL16 family.

The chain is Large ribosomal subunit protein uL16 from Archaeoglobus fulgidus (strain ATCC 49558 / DSM 4304 / JCM 9628 / NBRC 100126 / VC-16).